A 68-amino-acid chain; its full sequence is ATP synthase F(0) complex subunit 8 (68 aa).

The helical transmembrane segment at 8–24 threads the bilayer; it reads VWPTTITPMLLTLFLIT. Lys-54 carries the post-translational modification N6-acetyllysine; alternate. The residue at position 54 (Lys-54) is an N6-succinyllysine; alternate. An N6-acetyllysine modification is found at Lys-57.

The protein belongs to the ATPase protein 8 family. As to quaternary structure, component of the ATP synthase complex composed at least of ATP5F1A/subunit alpha, ATP5F1B/subunit beta, ATP5MC1/subunit c (homooctomer), MT-ATP6/subunit a, MT-ATP8/subunit 8, ATP5ME/subunit e, ATP5MF/subunit f, ATP5MG/subunit g, ATP5MK/subunit k, ATP5MJ/subunit j, ATP5F1C/subunit gamma, ATP5F1D/subunit delta, ATP5F1E/subunit epsilon, ATP5PF/subunit F6, ATP5PB/subunit b, ATP5PD/subunit d, ATP5PO/subunit OSCP. ATP synthase complex consists of a soluble F(1) head domain (subunits alpha(3) and beta(3)) - the catalytic core - and a membrane F(0) domain - the membrane proton channel (subunits c, a, 8, e, f, g, k and j). These two domains are linked by a central stalk (subunits gamma, delta, and epsilon) rotating inside the F1 region and a stationary peripheral stalk (subunits F6, b, d, and OSCP). Interacts with PRICKLE3.

The protein resides in the mitochondrion membrane. In terms of biological role, subunit 8, of the mitochondrial membrane ATP synthase complex (F(1)F(0) ATP synthase or Complex V) that produces ATP from ADP in the presence of a proton gradient across the membrane which is generated by electron transport complexes of the respiratory chain. ATP synthase complex consist of a soluble F(1) head domain - the catalytic core - and a membrane F(1) domain - the membrane proton channel. These two domains are linked by a central stalk rotating inside the F(1) region and a stationary peripheral stalk. During catalysis, ATP synthesis in the catalytic domain of F(1) is coupled via a rotary mechanism of the central stalk subunits to proton translocation. In vivo, can only synthesize ATP although its ATP hydrolase activity can be activated artificially in vitro. Part of the complex F(0) domain. This is ATP synthase F(0) complex subunit 8 from Pan paniscus (Pygmy chimpanzee).